Reading from the N-terminus, the 395-residue chain is ATP phosphoribosyltransferase regulatory subunit (395 aa).

Belongs to the class-II aminoacyl-tRNA synthetase family. HisZ subfamily. Heteromultimer composed of HisG and HisZ subunits.

The protein localises to the cytoplasm. Its pathway is amino-acid biosynthesis; L-histidine biosynthesis; L-histidine from 5-phospho-alpha-D-ribose 1-diphosphate: step 1/9. In terms of biological role, required for the first step of histidine biosynthesis. May allow the feedback regulation of ATP phosphoribosyltransferase activity by histidine. The chain is ATP phosphoribosyltransferase regulatory subunit from Pseudomonas syringae pv. tomato (strain ATCC BAA-871 / DC3000).